The sequence spans 317 residues: 4-hydroxy-3-methylbut-2-enyl diphosphate reductase (317 aa).

Cys12 is a [4Fe-4S] cluster binding site. Positions 41 and 74 each coordinate (2E)-4-hydroxy-3-methylbut-2-enyl diphosphate. Dimethylallyl diphosphate contacts are provided by His41 and His74. Isopentenyl diphosphate contacts are provided by His41 and His74. Cys97 serves as a coordination point for [4Fe-4S] cluster. (2E)-4-hydroxy-3-methylbut-2-enyl diphosphate is bound at residue His125. His125 contacts dimethylallyl diphosphate. His125 contacts isopentenyl diphosphate. Glu127 functions as the Proton donor in the catalytic mechanism. Position 168 (Thr168) interacts with (2E)-4-hydroxy-3-methylbut-2-enyl diphosphate. Residue Cys198 coordinates [4Fe-4S] cluster. Positions 226, 227, 228, and 270 each coordinate (2E)-4-hydroxy-3-methylbut-2-enyl diphosphate. Ser226, Ser227, Asn228, and Ser270 together coordinate dimethylallyl diphosphate. Ser226, Ser227, Asn228, and Ser270 together coordinate isopentenyl diphosphate.

It belongs to the IspH family. As to quaternary structure, homodimer. The cofactor is [4Fe-4S] cluster.

It catalyses the reaction isopentenyl diphosphate + 2 oxidized [2Fe-2S]-[ferredoxin] + H2O = (2E)-4-hydroxy-3-methylbut-2-enyl diphosphate + 2 reduced [2Fe-2S]-[ferredoxin] + 2 H(+). The enzyme catalyses dimethylallyl diphosphate + 2 oxidized [2Fe-2S]-[ferredoxin] + H2O = (2E)-4-hydroxy-3-methylbut-2-enyl diphosphate + 2 reduced [2Fe-2S]-[ferredoxin] + 2 H(+). The protein operates within isoprenoid biosynthesis; dimethylallyl diphosphate biosynthesis; dimethylallyl diphosphate from (2E)-4-hydroxy-3-methylbutenyl diphosphate: step 1/1. It participates in isoprenoid biosynthesis; isopentenyl diphosphate biosynthesis via DXP pathway; isopentenyl diphosphate from 1-deoxy-D-xylulose 5-phosphate: step 6/6. Functionally, catalyzes the conversion of 1-hydroxy-2-methyl-2-(E)-butenyl 4-diphosphate (HMBPP) into a mixture of isopentenyl diphosphate (IPP) and dimethylallyl diphosphate (DMAPP). Acts in the terminal step of the DOXP/MEP pathway for isoprenoid precursor biosynthesis. The sequence is that of 4-hydroxy-3-methylbut-2-enyl diphosphate reductase from Yersinia pestis bv. Antiqua (strain Antiqua).